Here is a 278-residue protein sequence, read N- to C-terminus: HTH-type transcriptional activator RhaS (278 aa).

The 99-residue stretch at 174–272 folds into the HTH araC/xylS-type domain; sequence NQLMAWLEDH…NWSPRDIRQG (99 aa). 2 DNA-binding regions (H-T-H motif) span residues 191 to 212 and 239 to 262; these read EAVA…KQHT and VTEI…RREF.

As to quaternary structure, binds DNA as a dimer.

It localises to the cytoplasm. In terms of biological role, activates expression of the rhaBAD and rhaT operons. This Salmonella arizonae (strain ATCC BAA-731 / CDC346-86 / RSK2980) protein is HTH-type transcriptional activator RhaS.